The chain runs to 458 residues: MKMIEKYRGKKVLVLGLGKSGVNAAKLLKKLGAEVTVNDKNTPSDLTQVNELKNEGIEVITGSHPLELLENIDLMVKNPGIPYTNVLVSGAKDKGIKIITEPELAFEISDARFVGVTGTNGKTTTTTMISLMLNQGQTEGKAYVAGNIGVPASQVAQEATSKDTIVTELSSFQLLGITEYHPKVAVLTNIYEAHIDYHGTRENYVNAKMRIVMNQTEDDYFVVNWDNEEWQELSQRSKAKIVPFSRLGKSKDGAYVAGGYLFYKEDKIMPVDNIKVPGTHNVENALAAIAVAKIFGKSNEDIKEVLTTFSGVRHRTQYVTTLNGRKFYNDSKATNMEATEKALAGFNNPVVLLAGGLDRGFTFEKLEPSLKNKVHAMIVFGETADLMAKAGKEAGVEKIIKTKDAVSAVPEAYKVSNEGDVILLSPACASWDQWPTFEVRGDKFIEAVEKLTEELEEK.

118–124 contributes to the ATP binding site; sequence GTNGKTT.

The protein belongs to the MurCDEF family.

Its subcellular location is the cytoplasm. It carries out the reaction UDP-N-acetyl-alpha-D-muramoyl-L-alanine + D-glutamate + ATP = UDP-N-acetyl-alpha-D-muramoyl-L-alanyl-D-glutamate + ADP + phosphate + H(+). It participates in cell wall biogenesis; peptidoglycan biosynthesis. Functionally, cell wall formation. Catalyzes the addition of glutamate to the nucleotide precursor UDP-N-acetylmuramoyl-L-alanine (UMA). The chain is UDP-N-acetylmuramoylalanine--D-glutamate ligase from Ligilactobacillus salivarius (strain UCC118) (Lactobacillus salivarius).